The sequence spans 57 residues: Large ribosomal subunit protein bL33 (57 aa).

This sequence belongs to the bacterial ribosomal protein bL33 family.

This chain is Large ribosomal subunit protein bL33, found in Bifidobacterium longum (strain NCC 2705).